The chain runs to 273 residues: Dermonecrotic toxin SdSicTox-betaIIB1aiii (273 aa).

Residue His4 is part of the active site. Mg(2+) contacts are provided by Glu24 and Asp26. The active-site Nucleophile is the His40. Intrachain disulfides connect Cys44/Cys50 and Cys46/Cys189. Mg(2+) is bound at residue Asp84.

This sequence belongs to the arthropod phospholipase D family. Class II subfamily. It depends on Mg(2+) as a cofactor. In terms of tissue distribution, expressed by the venom gland.

Its subcellular location is the secreted. The enzyme catalyses an N-(acyl)-sphingosylphosphocholine = an N-(acyl)-sphingosyl-1,3-cyclic phosphate + choline. It carries out the reaction an N-(acyl)-sphingosylphosphoethanolamine = an N-(acyl)-sphingosyl-1,3-cyclic phosphate + ethanolamine. It catalyses the reaction a 1-acyl-sn-glycero-3-phosphocholine = a 1-acyl-sn-glycero-2,3-cyclic phosphate + choline. The catalysed reaction is a 1-acyl-sn-glycero-3-phosphoethanolamine = a 1-acyl-sn-glycero-2,3-cyclic phosphate + ethanolamine. Dermonecrotic toxins cleave the phosphodiester linkage between the phosphate and headgroup of certain phospholipids (sphingolipid and lysolipid substrates), forming an alcohol (often choline) and a cyclic phosphate. This toxin acts on sphingomyelin (SM). It may also act on ceramide phosphoethanolamine (CPE), lysophosphatidylcholine (LPC) and lysophosphatidylethanolamine (LPE), but not on lysophosphatidylserine (LPS), and lysophosphatidylglycerol (LPG). It acts by transphosphatidylation, releasing exclusively cyclic phosphate products as second products. Induces dermonecrosis, hemolysis, increased vascular permeability, edema, inflammatory response, and platelet aggregation. The chain is Dermonecrotic toxin SdSicTox-betaIIB1aiii from Sicarius cf. damarensis (strain GJB-2008) (Six-eyed sand spider).